Consider the following 125-residue polypeptide: Large ribosomal subunit protein uL22c (125 aa).

The protein belongs to the universal ribosomal protein uL22 family. Part of the 50S ribosomal subunit.

The protein resides in the plastid. Its subcellular location is the chloroplast. Functionally, this protein binds specifically to 23S rRNA. The globular domain of the protein is located near the polypeptide exit tunnel on the outside of the subunit, while an extended beta-hairpin is found that lines the wall of the exit tunnel in the center of the 70S ribosome. The polypeptide is Large ribosomal subunit protein uL22c (rpl22) (Nuphar advena (Common spatterdock)).